A 500-amino-acid chain; its full sequence is Probable malate:quinone oxidoreductase (500 aa).

This sequence belongs to the MQO family. The cofactor is FAD.

It carries out the reaction (S)-malate + a quinone = a quinol + oxaloacetate. The protein operates within carbohydrate metabolism; tricarboxylic acid cycle; oxaloacetate from (S)-malate (quinone route): step 1/1. The sequence is that of Probable malate:quinone oxidoreductase from Corynebacterium glutamicum (strain R).